Here is a 73-residue protein sequence, read N- to C-terminus: Copper chaperone ATX1 (73 aa).

The HMA domain occupies isoleucine 4–arginine 68. Residues cysteine 15 and cysteine 18 each coordinate Cu(+).

It belongs to the ATX1 family. Homodimer. Interacts with CCC2 via the copper anion.

Its subcellular location is the cytoplasm. With respect to regulation, tetrathiomolybdate directly and reversibly down-regulates copper delivery to secreted metalloenzymes. Functionally, copper homeostasis factor that specifically transports copper to the secretory pathway for incorporation into copper enzymes destined for the cell surface or extracellular milieu. Shuttles copper to the transport ATPase CCC2 on a post-Golgi vesicle for eventual targeting to the cell-surface high-affinity iron uptake protein FET3. Protects against oxygen toxicity. The sequence is that of Copper chaperone ATX1 from Saccharomyces cerevisiae (strain ATCC 204508 / S288c) (Baker's yeast).